The sequence spans 372 residues: 4-hydroxy-3-methylbut-2-en-1-yl diphosphate synthase (flavodoxin) (372 aa).

Residues Cys270, Cys273, Cys305, and Glu312 each contribute to the [4Fe-4S] cluster site.

Belongs to the IspG family. Requires [4Fe-4S] cluster as cofactor.

The enzyme catalyses (2E)-4-hydroxy-3-methylbut-2-enyl diphosphate + oxidized [flavodoxin] + H2O + 2 H(+) = 2-C-methyl-D-erythritol 2,4-cyclic diphosphate + reduced [flavodoxin]. Its pathway is isoprenoid biosynthesis; isopentenyl diphosphate biosynthesis via DXP pathway; isopentenyl diphosphate from 1-deoxy-D-xylulose 5-phosphate: step 5/6. Its function is as follows. Converts 2C-methyl-D-erythritol 2,4-cyclodiphosphate (ME-2,4cPP) into 1-hydroxy-2-methyl-2-(E)-butenyl 4-diphosphate. The chain is 4-hydroxy-3-methylbut-2-en-1-yl diphosphate synthase (flavodoxin) from Pseudoalteromonas translucida (strain TAC 125).